The sequence spans 172 residues: Small ribosomal subunit protein uS5 (172 aa).

The S5 DRBM domain occupies 16 to 79 (LKDRLVAINR…ESAKKNLTRV (64 aa)).

The protein belongs to the universal ribosomal protein uS5 family. Part of the 30S ribosomal subunit. Contacts proteins S4 and S8.

Functionally, with S4 and S12 plays an important role in translational accuracy. Its function is as follows. Located at the back of the 30S subunit body where it stabilizes the conformation of the head with respect to the body. The protein is Small ribosomal subunit protein uS5 of Bacteroides fragilis (strain ATCC 25285 / DSM 2151 / CCUG 4856 / JCM 11019 / LMG 10263 / NCTC 9343 / Onslow / VPI 2553 / EN-2).